A 203-amino-acid chain; its full sequence is Probable cytochrome c oxidase subunit 3 (203 aa).

Transmembrane regions (helical) follow at residues 30-50, 71-91, 96-116, 143-163, and 179-199; these read IVWLSSELMFFAGLFAFYFSA, VPVTLVLIASSFTCQMGVFAA, IFGLRRWYVITFLMGLFFVLG, ATGFHGLHVTGGLIAFIFLLV, and IVVSYYWHFVDIVWIALFTVI.

It belongs to the cytochrome c oxidase subunit 3 family.

The protein resides in the cell membrane. It carries out the reaction 4 Fe(II)-[cytochrome c] + O2 + 8 H(+)(in) = 4 Fe(III)-[cytochrome c] + 2 H2O + 4 H(+)(out). The sequence is that of Probable cytochrome c oxidase subunit 3 (ctaE) from Mycobacterium bovis (strain ATCC BAA-935 / AF2122/97).